The primary structure comprises 203 residues: MRPMTRKTRIQPIEHAVEDDDNGYDRPSKSQLKREMHALQELGQALVDLPKDALKRMPMPEDLADAVREARRITDHEGKRRQLQYVGRVMRSLTDDETAALRTALDAQRGVNKAATARLHWIERTREQLLASDDALTEFLRQHPDADIQEGRTLIRNARKEAQQGKPPRYFRELFQWIKAAGGASDSDDEAAGDAGDDHDDEA.

Disordered stretches follow at residues 1 to 31 and 183 to 203; these read MRPM…SKSQ and GASD…DDEA. Over residues 186–203 the composition is skewed to acidic residues; sequence DSDDEAAGDAGDDHDDEA.

This sequence belongs to the DarP family.

The protein resides in the cytoplasm. Its function is as follows. Member of a network of 50S ribosomal subunit biogenesis factors which assembles along the 30S-50S interface, preventing incorrect 23S rRNA structures from forming. Promotes peptidyl transferase center (PTC) maturation. The protein is Dual-action ribosomal maturation protein DarP of Burkholderia cenocepacia (strain ATCC BAA-245 / DSM 16553 / LMG 16656 / NCTC 13227 / J2315 / CF5610) (Burkholderia cepacia (strain J2315)).